We begin with the raw amino-acid sequence, 64 residues long: Conotoxin Tx3.5-a (64 aa).

An N-terminal signal peptide occupies residues 1–19 (MSKLGVLLTICLLLFPLTA). A propeptide spanning residues 20-47 (LPLDGDQPADQAAERMQAEQHPLFDQKR) is cleaved from the precursor. 3 disulfide bridges follow: Cys-49/Cys-58, Cys-50/Cys-62, and Cys-54/Cys-63. Cysteine amide is present on Cys-63.

The protein belongs to the conotoxin M superfamily. Post-translationally, contains 3 disulfide bonds. In terms of processing, two peptides are produced from this precursor. Conotoxin Tx3.5-b is amidated at Cys-63, conotoxin Tx3.5-a has an unmodified C-terminus. In terms of tissue distribution, expressed by the venom duct. Is present in all duct parts with a highest content in part 2 (proximal of the venom bulb) and then decreases in concentration toward the end of the duct.

Its subcellular location is the secreted. The protein is Conotoxin Tx3.5-a of Conus textile (Cloth-of-gold cone).